A 284-amino-acid chain; its full sequence is MFRLWNQLTKPRVTVLVLATVLPGMYLGTTGYPSLTVISITLFGTYLMSSASFILNQYIERERDAVMYRTKQRPIPAGEISPTFALLLGIVVAIVSFGILTYFINLLTAVCALAALLLYVFLYTIWLKPRTEQNIVIGGISGCIGPLIGYAAMANALPMQAWVMFLMIFLWTPAHFWALAIFLKDDYEFAGIPMMPVVSGIEKTVNQIFLYAIAYSLSVIGFYFVDDRMGYLFLLSAIVLTVLILGFAYRLKLSMDKVLAKRFFFFSILHLFLVSIAIVIDSKI.

9 helical membrane passes run 13–33, 35–55, 84–104, 106–126, 134–154, 163–183, 205–225, 229–249, and 264–284; these read VTVL…TGYP, LTVI…SFIL, FALL…TYFI, LLTA…YTIW, NIVI…AAMA, VMFL…AIFL, VNQI…FYFV, MGYL…GFAY, and FFFS…DSKI.

This sequence belongs to the UbiA prenyltransferase family. Protoheme IX farnesyltransferase subfamily.

It is found in the cell inner membrane. It carries out the reaction heme b + (2E,6E)-farnesyl diphosphate + H2O = Fe(II)-heme o + diphosphate. It participates in porphyrin-containing compound metabolism; heme O biosynthesis; heme O from protoheme: step 1/1. Converts heme B (protoheme IX) to heme O by substitution of the vinyl group on carbon 2 of heme B porphyrin ring with a hydroxyethyl farnesyl side group. In Leptospira biflexa serovar Patoc (strain Patoc 1 / Ames), this protein is Protoheme IX farnesyltransferase.